Consider the following 448-residue polypeptide: ATP-dependent protease ATPase subunit HslU (448 aa).

Residues isoleucine 18, 60 to 65, aspartate 261, glutamate 326, and arginine 398 contribute to the ATP site; that span reads GVGKTE.

It belongs to the ClpX chaperone family. HslU subfamily. A double ring-shaped homohexamer of HslV is capped on each side by a ring-shaped HslU homohexamer. The assembly of the HslU/HslV complex is dependent on binding of ATP.

The protein localises to the cytoplasm. ATPase subunit of a proteasome-like degradation complex; this subunit has chaperone activity. The binding of ATP and its subsequent hydrolysis by HslU are essential for unfolding of protein substrates subsequently hydrolyzed by HslV. HslU recognizes the N-terminal part of its protein substrates and unfolds these before they are guided to HslV for hydrolysis. The chain is ATP-dependent protease ATPase subunit HslU from Paraburkholderia xenovorans (strain LB400).